We begin with the raw amino-acid sequence, 906 residues long: Protein translocase subunit SecA (906 aa).

Residues Gln86, 104 to 108, and Asp499 each bind ATP; that span reads GEGKT. Positions 834 to 847 are enriched in basic and acidic residues; it reads KLQKNMRESREDPA. The interval 834–887 is disordered; sequence KLQKNMRESREDPAFSKYNAGSSLETDLKPVVSRVDPKDRNPDDPTSWGRVSRN. The Zn(2+) site is built by Cys890, Cys892, Cys901, and His902.

The protein belongs to the SecA family. Monomer and homodimer. Part of the essential Sec protein translocation apparatus which comprises SecA, SecYEG and auxiliary proteins SecDF-YajC and YidC. It depends on Zn(2+) as a cofactor.

It is found in the cell inner membrane. Its subcellular location is the cytoplasm. It catalyses the reaction ATP + H2O + cellular proteinSide 1 = ADP + phosphate + cellular proteinSide 2.. In terms of biological role, part of the Sec protein translocase complex. Interacts with the SecYEG preprotein conducting channel. Has a central role in coupling the hydrolysis of ATP to the transfer of proteins into and across the cell membrane, serving both as a receptor for the preprotein-SecB complex and as an ATP-driven molecular motor driving the stepwise translocation of polypeptide chains across the membrane. This Rickettsia felis (strain ATCC VR-1525 / URRWXCal2) (Rickettsia azadi) protein is Protein translocase subunit SecA.